The chain runs to 266 residues: MARGFIDCHCHISASEFTTDTDDVLLRAKKAGVKALVAVTEGASEFEKVIQLSKTYPGFVFPCFGIHPLQGSGQDLHSVRVQDLDPFLYLFQTYKDDIVAIGEIGLDFTPWYSSITQERDEQMKVFIKQLEISKELDLPVNVHSRSSAKVTIATMKELGIRQALLHNFAGKPSVAMEGVQAGFCFSFPPAVSKNEQRAKLIRQIPLEHVCLETDSPALGLDKHVRNEPSNVTISCEYIAKVKGISSDVVMEVTTQNALRLFSKLKI.

Histidine 9, histidine 11, glutamate 103, histidine 143, histidine 166, and aspartate 214 together coordinate Zn(2+).

Belongs to the metallo-dependent hydrolases superfamily. TatD-type hydrolase family. Mn(2+) serves as cofactor. Requires Ca(2+) as cofactor. It depends on Mg(2+) as a cofactor. Zn(2+) is required as a cofactor.

The protein localises to the nucleus. The 3'-exonuclease activity is sensitive to the metal ion present in the active site, whereas the AP endodeoxyribonuclease activity is observed in a variety of divalent metal cofactors. 3'-exoxonuclease activity is suppressed in the presence of Ca(2+), Zn(2+) and Ni(2+). Exhibits 3'-exonuclease activities and apurinic/apyrimidinic (AP) endonuclease (in vitro). Show preferential AP endonuclease activity on double-stranded DNA substrates and 3'- exonuclease activity on single-stranded DNA. This is Putative deoxyribonuclease tatdn3 (tatdn3) from Danio rerio (Zebrafish).